A 913-amino-acid polypeptide reads, in one-letter code: Epithelial discoidin domain-containing receptor 1 (913 aa).

The first 18 residues, 1 to 18, serve as a signal peptide directing secretion; sequence MGPEALSSLLLLLLVASG. The Extracellular portion of the chain corresponds to 21 to 417; it reads DMKGHFDPAK…VAKAEGSPTA (397 aa). Residues 31 to 185 enclose the F5/8 type C domain; that stretch reads CRYALGMQDR…VCLRVELYGC (155 aa). 2 disulfides stabilise this stretch: C31/C185 and C74/C177. The segment at 192–367 is DS-like domain; sequence LSYTAPVGQT…LFSEISFISD (176 aa). 6 residues coordinate Ca(2+): N211, Q230, D233, V235, Y253, and Y255. N211 carries N-linked (GlcNAc...) asparagine glycosylation. An N-linked (GlcNAc...) asparagine glycan is attached at N260. C303 and C348 are joined by a disulfide. Ca(2+) is bound by residues S360 and E361. N-linked (GlcNAc...) asparagine glycosylation is found at N370 and N394. Residues 418 to 438 traverse the membrane as a helical segment; it reads ILIGCLVAIILLLLLIIALML. Over 439 to 913 the chain is Cytoplasmic; that stretch reads WRLHWRRLLS…FLAEDALNTV (475 aa). Residues 470-499 are disordered; it reads ILINNRPGPREPPPYQEPRPRGNPPHSAPC. The span at 479-496 shows a compositional bias: pro residues; that stretch reads REPPPYQEPRPRGNPPHS. The PPxY motif motif lies at 481–484; sequence PPPY. Y484, Y513, and Y520 each carry phosphotyrosine; by autocatalysis. In terms of domain architecture, Protein kinase spans 610–905; sequence LRFKEKLGEG…PPFSQLHRFL (296 aa). An ATP-binding site is contributed by 616-624; that stretch reads LGEGQFGEV. Position 631 is a phosphoserine (S631). Residue K655 participates in ATP binding. Y740 is subject to Phosphotyrosine; by autocatalysis. D766 (proton acceptor) is an active-site residue. Phosphotyrosine; by autocatalysis is present on residues Y792, Y796, and Y797.

Belongs to the protein kinase superfamily. Tyr protein kinase family. Insulin receptor subfamily. In terms of assembly, homodimer. Interacts (via PPxY motif) with WWC1 (via WW domains) in a collagen-regulated manner. Forms a tripartite complex with WWC1 and PRKCZ, but predominantly in the absence of collagen. Interacts (tyrosine phosphorylated) with SHC1. Interacts with SRC. Interacts with MYH9. Interacts with CDH1. Interacts with PTPN11. Interacts with NCK2. Autophosphorylated in response to fibrillar collagen binding. Post-translationally, glycosylation of Asn-211, but apparently not of Asn-260 or Asn-394, prevents autophosphorylation from occurring in the absence of collagen. Detected in T-47D, MDA-MB-175 and HBL-100 breast carcinoma cells, A-431 epidermoid carcinoma cells, SW48 and SNU-C2B colon carcinoma cells and Hs 294T melanoma cells (at protein level). Expressed at low levels in most adult tissues and is highest in the brain, lung, placenta and kidney. Lower levels of expression are detected in melanocytes, heart, liver, skeletal muscle and pancreas. Abundant in breast carcinoma cell lines. In the colonic mucosa, expressed in epithelia but not in the connective tissue of the lamina propria. In the thyroid gland, expressed in the epithelium of the thyroid follicles. In pancreas, expressed in the islets of Langerhans cells, but not in the surrounding epithelial cells of the exocrine pancreas. In kidney, expressed in the epithelia of the distal tubules. Not expressed in connective tissue, endothelial cells, adipose tissue, muscle cells or cells of hematopoietic origin.

The protein resides in the cell membrane. Its subcellular location is the secreted. The enzyme catalyses L-tyrosyl-[protein] + ATP = O-phospho-L-tyrosyl-[protein] + ADP + H(+). Inhibited by the multi-targeted cancer drugs imatinib and ponatinib. Tyrosine kinase that functions as a cell surface receptor for fibrillar collagen and regulates cell attachment to the extracellular matrix, remodeling of the extracellular matrix, cell migration, differentiation, survival and cell proliferation. Collagen binding triggers a signaling pathway that involves SRC and leads to the activation of MAP kinases. Regulates remodeling of the extracellular matrix by up-regulation of the matrix metalloproteinases MMP2, MMP7 and MMP9, and thereby facilitates cell migration and wound healing. Required for normal blastocyst implantation during pregnancy, for normal mammary gland differentiation and normal lactation. Required for normal ear morphology and normal hearing. Promotes smooth muscle cell migration, and thereby contributes to arterial wound healing. Also plays a role in tumor cell invasion. Phosphorylates PTPN11. In Homo sapiens (Human), this protein is Epithelial discoidin domain-containing receptor 1 (DDR1).